A 364-amino-acid chain; its full sequence is L-carnitine dehydrogenase (364 aa).

Residue 11 to 16 (GGGVIG) coordinates NAD(+). Positions 336 to 364 (KPAASTAAEKAKASKPVKKAEKPKKKKKG) are disordered. A compositionally biased stretch (basic residues) spans 348–364 (ASKPVKKAEKPKKKKKG).

This sequence belongs to the 3-hydroxyacyl-CoA dehydrogenase family. L-carnitine dehydrogenase subfamily. Homodimer.

Its subcellular location is the cytoplasm. The catalysed reaction is carnitine + NAD(+) = 3-dehydrocarnitine + NADH + H(+). It functions in the pathway amine and polyamine metabolism; carnitine metabolism. Catalyzes the NAD(+)-dependent oxidation of L-carnitine to 3-dehydrocarnitine. The chain is L-carnitine dehydrogenase from Mesorhizobium japonicum (strain LMG 29417 / CECT 9101 / MAFF 303099) (Mesorhizobium loti (strain MAFF 303099)).